A 256-amino-acid polypeptide reads, in one-letter code: Thiazole synthase (256 aa).

Lys-95 acts as the Schiff-base intermediate with DXP in catalysis. 1-deoxy-D-xylulose 5-phosphate contacts are provided by residues Gly-156, Ala-182–Gly-183, and Asn-204–Thr-205.

It belongs to the ThiG family. In terms of assembly, homotetramer. Forms heterodimers with either ThiH or ThiS.

It localises to the cytoplasm. The enzyme catalyses [ThiS sulfur-carrier protein]-C-terminal-Gly-aminoethanethioate + 2-iminoacetate + 1-deoxy-D-xylulose 5-phosphate = [ThiS sulfur-carrier protein]-C-terminal Gly-Gly + 2-[(2R,5Z)-2-carboxy-4-methylthiazol-5(2H)-ylidene]ethyl phosphate + 2 H2O + H(+). It participates in cofactor biosynthesis; thiamine diphosphate biosynthesis. Its function is as follows. Catalyzes the rearrangement of 1-deoxy-D-xylulose 5-phosphate (DXP) to produce the thiazole phosphate moiety of thiamine. Sulfur is provided by the thiocarboxylate moiety of the carrier protein ThiS. In vitro, sulfur can be provided by H(2)S. The polypeptide is Thiazole synthase (Salmonella paratyphi A (strain ATCC 9150 / SARB42)).